The chain runs to 118 residues: uncharacterized protein (118 aa).

The disordered stretch occupies residues 1–49 (MDYVGGSLKLKNVKKKPLKKKKKDSKKLAEKVQEHSSRDKSPLEENGVS). Positions 11-25 (KNVKKKPLKKKKKDS) are enriched in basic residues. Over residues 26 to 43 (KKLAEKVQEHSSRDKSPL) the composition is skewed to basic and acidic residues.

This is an uncharacterized protein from Schizosaccharomyces pombe (strain 972 / ATCC 24843) (Fission yeast).